Reading from the N-terminus, the 241-residue chain is Uracil-DNA glycosylase (241 aa).

Asp-68 functions as the Proton acceptor in the catalytic mechanism.

The protein belongs to the uracil-DNA glycosylase (UDG) superfamily. UNG family.

The protein localises to the cytoplasm. It carries out the reaction Hydrolyzes single-stranded DNA or mismatched double-stranded DNA and polynucleotides, releasing free uracil.. In terms of biological role, excises uracil residues from the DNA which can arise as a result of misincorporation of dUMP residues by DNA polymerase or due to deamination of cytosine. In Sinorhizobium medicae (strain WSM419) (Ensifer medicae), this protein is Uracil-DNA glycosylase.